The following is a 365-amino-acid chain: Flagellar P-ring protein (365 aa).

Positions 1–22 (MSVRRFLVWILALTVGAAPVMA) are cleaved as a signal peptide.

Belongs to the FlgI family. In terms of assembly, the basal body constitutes a major portion of the flagellar organelle and consists of four rings (L,P,S, and M) mounted on a central rod.

Its subcellular location is the periplasm. It localises to the bacterial flagellum basal body. Assembles around the rod to form the L-ring and probably protects the motor/basal body from shearing forces during rotation. This Marinobacter nauticus (strain ATCC 700491 / DSM 11845 / VT8) (Marinobacter aquaeolei) protein is Flagellar P-ring protein.